The chain runs to 164 residues: Cell cycle link protein (164 aa).

A binding to host SKP1 protein region spans residues 9–22 (LPEELKEKIMNEHL). Positions 111 to 115 (LYCSE) match the LXCXE motif, interaction with host RBR motif.

It belongs to the nanovirus Clink protein family. In terms of assembly, interacts with host SKP1. Interacts (via LXCXE domain) with host retinoblastoma-related protein 1 (RBR1). Interacts (via LXCXE domain) with retinoblastoma-related proteins (RBR).

Functionally, interacts with and disrupts the function of host retinoblastoma-related proteins RBR, which are key regulators of the cell cycle. Induces transcriptional activation of E2F-regulated S-phase and G2/M-phase-specific genes. Inactivation of the ability of RBR to arrest the cell cycle leads to the stimulation of viral DNA replication. The chain is Cell cycle link protein (DNA-C) from Trifolium subterraneum (Subterranean clover).